The sequence spans 118 residues: UPF0295 protein BcerKBAB4_0454 (118 aa).

A run of 2 helical transmembrane segments spans residues 12 to 32 (IRTFALSLVFIGLFIAYLGVF) and 43 to 63 (FMMVGFLAVIASTVVYFWIGM).

Belongs to the UPF0295 family.

Its subcellular location is the cell membrane. This chain is UPF0295 protein BcerKBAB4_0454, found in Bacillus mycoides (strain KBAB4) (Bacillus weihenstephanensis).